Reading from the N-terminus, the 384-residue chain is tRNA-specific 2-thiouridylase MnmA (384 aa).

The disordered stretch occupies residues 1 to 26 (MDEGIRASGGIRACQTGKQKQGRKRP). Residues 36-43 (GMSGGVDS) and methionine 62 contribute to the ATP site. The tract at residues 122 to 124 (NPD) is interaction with target base in tRNA. Cysteine 127 acts as the Nucleophile in catalysis. Cysteine 127 and cysteine 223 form a disulfide bridge. Glycine 151 contributes to the ATP binding site. Positions 173–175 (KDQ) are interaction with tRNA. Catalysis depends on cysteine 223, which acts as the Cysteine persulfide intermediate. Residues 334 to 335 (RY) form an interaction with tRNA region.

This sequence belongs to the MnmA/TRMU family.

The protein resides in the cytoplasm. It carries out the reaction S-sulfanyl-L-cysteinyl-[protein] + uridine(34) in tRNA + AH2 + ATP = 2-thiouridine(34) in tRNA + L-cysteinyl-[protein] + A + AMP + diphosphate + H(+). Catalyzes the 2-thiolation of uridine at the wobble position (U34) of tRNA, leading to the formation of s(2)U34. In Chromobacterium violaceum (strain ATCC 12472 / DSM 30191 / JCM 1249 / CCUG 213 / NBRC 12614 / NCIMB 9131 / NCTC 9757 / MK), this protein is tRNA-specific 2-thiouridylase MnmA.